A 78-amino-acid chain; its full sequence is Large ribosomal subunit protein bL31 (78 aa).

Residues C16, C18, C38, and C41 each contribute to the Zn(2+) site.

The protein belongs to the bacterial ribosomal protein bL31 family. Type A subfamily. Part of the 50S ribosomal subunit. The cofactor is Zn(2+).

Binds the 23S rRNA. This is Large ribosomal subunit protein bL31 from Frankia alni (strain DSM 45986 / CECT 9034 / ACN14a).